Consider the following 319-residue polypeptide: F-box only protein 8 (319 aa).

The F-box domain maps to 68–111; that stretch reads FINLEMLPPELSFTILSYLNATDLCLASCVWQDLANDELLWQGL. The region spanning 146-276 is the SEC7 domain; it reads FNANPEEGVS…LILLSIDLTS (131 aa).

In terms of tissue distribution, high expression in brain, heart, kidney, liver, lung, skeletal muscle, testis, and day-7 embryos.

Its function is as follows. May promote guanine-nucleotide exchange on an ARF. Promotes the activation of ARF through replacement of GDP with GTP (Potential). This is F-box only protein 8 (Fbxo8) from Mus musculus (Mouse).